A 355-amino-acid chain; its full sequence is Homeobox protein knotted-1-like 12 (355 aa).

Disordered stretches follow at residues 52–82 and 207–233; these read AAGP…GGGE and ECVG…PRAE. Basic residues predominate over residues 60-75; that stretch reads GHGHPHHGGGHHHSKH. Basic and acidic residues predominate over residues 218–233; the sequence is PSGRENEPPEIDPRAE. The 21-residue stretch at 236–256 folds into the ELK domain; that stretch reads ELKFQLLKKYSGYLSSLRQEF. Residues 257 to 320 constitute a DNA-binding region (homeobox; TALE-type); sequence SKKKKKGKLP…NQRKRHWKPS (64 aa).

The protein belongs to the TALE/KNOX homeobox family. As to expression, expressed in stems, rachis and inflorescence.

The protein resides in the nucleus. In terms of biological role, probable transcription factor that may be involved in shoot formation during embryogenesis. This chain is Homeobox protein knotted-1-like 12 (OSH15), found in Oryza sativa subsp. japonica (Rice).